The following is a 704-amino-acid chain: Elongation factor G (704 aa).

Residues 8 to 290 enclose the tr-type G domain; the sequence is ARYRNIGISA…AVIDYLPSPV (283 aa). GTP is bound by residues 17-24, 88-92, and 142-145; these read AHIDAGKT, DTPGH, and NKMD.

This sequence belongs to the TRAFAC class translation factor GTPase superfamily. Classic translation factor GTPase family. EF-G/EF-2 subfamily.

The protein localises to the cytoplasm. Functionally, catalyzes the GTP-dependent ribosomal translocation step during translation elongation. During this step, the ribosome changes from the pre-translocational (PRE) to the post-translocational (POST) state as the newly formed A-site-bound peptidyl-tRNA and P-site-bound deacylated tRNA move to the P and E sites, respectively. Catalyzes the coordinated movement of the two tRNA molecules, the mRNA and conformational changes in the ribosome. In Salmonella arizonae (strain ATCC BAA-731 / CDC346-86 / RSK2980), this protein is Elongation factor G.